The chain runs to 491 residues: Synaptotagmin-9 (491 aa).

Residues 1–52 lie on the Vesicular side of the membrane; the sequence is MPGARDALCHQALQLLAELCARGALEHDSCQDFIYHLRDRARPRLRDPDISV. Residues 9–31 are cysteine motif; that stretch reads CHQALQLLAELCARGALEHDSCQ. Residues 53 to 73 form a helical membrane-spanning segment; the sequence is SLLTLVVTACGLALFGVSLFV. At 74–491 the chain is on the cytoplasmic side; sequence SWKLCWVPWR…AHWHSLVEKR (418 aa). Ser177 is modified (phosphoserine). C2 domains are found at residues 220 to 341 and 352 to 485; these read ACGK…ILWK and DLGE…AHWH. Asp251, Asp257, Asp309, Phe310, Asp311, Ser314, Asp317, Asp383, Asp389, Asp443, and Asp445 together coordinate Ca(2+).

This sequence belongs to the synaptotagmin family. As to quaternary structure, homodimer; disulfide-linked via the cysteine motif. Can also form heterodimers with SYT3, SYT6, SYT7 and SYT10. It depends on Ca(2+) as a cofactor.

The protein resides in the cytoplasmic vesicle. It localises to the secretory vesicle. It is found in the synaptic vesicle membrane. Functionally, may be involved in Ca(2+)-dependent exocytosis of secretory vesicles through Ca(2+) and phospholipid binding to the C2 domain or may serve as Ca(2+) sensors in the process of vesicular trafficking and exocytosis. The chain is Synaptotagmin-9 (SYT9) from Homo sapiens (Human).